The sequence spans 721 residues: Kinesin-like protein KIF2C (721 aa).

A globular region spans residues 1 to 250 (MESLHARLFP…CSPLTVTDPI (250 aa)). Phosphoserine is present on residues S3 and S19. At S92 the chain carries Phosphoserine; by AURKB. The Microtubule tip localization signal motif lies at 95-98 (SKIP). A phosphoserine mark is found at S106, S108, S112, S162, S171, S183, and S188. Residues 164–188 (EAEEQAHSTRSTSSANPGNSVRRKS) are disordered. Residues 171-182 (STRSTSSANPGN) show a composition bias toward polar residues. Residues 203-234 (EKRAQNSELRIKRAQEYDSSFPNWEFARMIKE) are negative regulator of microtubule-binding. The Kinesin motor domain occupies 254-584 (RICVCVRKRP…LRYADRVKEL (331 aa)). Residues R260 and 344-351 (GQTGSGKT) each bind ATP. 2 positions are modified to phosphoserine: S515 and S626. A coiled-coil region spans residues 614–652 (GNEEEELSSQMSSFNEAMTQIRELEERALEELREIIQQG).

It belongs to the TRAFAC class myosin-kinesin ATPase superfamily. Kinesin family. MCAK/KIF2 subfamily. In terms of assembly, interacts with CENPH. Interacts with MTUS2/TIP150; the interaction is direct. Interacts with MAPRE1; the interaction is direct, regulated by phosphorylation and is probably required for targeting to growing microtubule plus ends. Interacts with KIF18B at microtubule tips; this interaction increases the affinity of both partners for microtubule plus ends and is required for robust microtubule depolymerization. Phosphorylation by AURKA or AURKB strongly reduces KIF18B-binding. In terms of processing, phosphorylation by AURKB, regulates association with centromeres and kinetochores and the microtubule depolymerization activity. Ubiquitinated.

Its subcellular location is the cytoplasm. The protein resides in the cytoskeleton. The protein localises to the nucleus. It is found in the chromosome. It localises to the centromere. Its subcellular location is the kinetochore. Functionally, in complex with KIF18B, constitutes the major microtubule plus-end depolymerizing activity in mitotic cells. Regulates the turnover of microtubules at the kinetochore and functions in chromosome segregation during mitosis. Plays a role in chromosome congression and is required for the lateral to end-on conversion of the chromosome-microtubule attachment. This chain is Kinesin-like protein KIF2C (Kif2c), found in Mus musculus (Mouse).